The following is a 335-amino-acid chain: Fructose-1,6-bisphosphatase class 1 (335 aa).

Residues Glu92, Asp114, Leu116, and Asp117 each contribute to the Mg(2+) site. Residues 117 to 120 (DGSS), Asn209, and Lys275 contribute to the substrate site. Residue Glu281 coordinates Mg(2+).

The protein belongs to the FBPase class 1 family. As to quaternary structure, homotetramer. It depends on Mg(2+) as a cofactor.

It localises to the cytoplasm. It catalyses the reaction beta-D-fructose 1,6-bisphosphate + H2O = beta-D-fructose 6-phosphate + phosphate. Its pathway is carbohydrate biosynthesis; gluconeogenesis. This chain is Fructose-1,6-bisphosphatase class 1, found in Delftia acidovorans (strain DSM 14801 / SPH-1).